The sequence spans 250 residues: Sulfate transporter CysZ (250 aa).

Transmembrane regions (helical) follow at residues 27-47, 64-84, 150-170, and 210-230; these read FVVLPLLANIILVGGAMYYLF, FLSWLSYVLWPLLALTILATF, FLLLLIPALGQTLGPIAWFLF, and MLVAFFTSIPIVNLFIVPVAV.

This sequence belongs to the CysZ family.

Its subcellular location is the cell inner membrane. High affinity, high specificity proton-dependent sulfate transporter, which mediates sulfate uptake. Provides the sulfur source for the cysteine synthesis pathway. This chain is Sulfate transporter CysZ, found in Vibrio cholerae serotype O1 (strain ATCC 39315 / El Tor Inaba N16961).